The chain runs to 157 residues: Glutathione peroxidase (157 aa).

Cysteine 35 is an active-site residue.

The protein belongs to the glutathione peroxidase family.

The catalysed reaction is 2 glutathione + H2O2 = glutathione disulfide + 2 H2O. The sequence is that of Glutathione peroxidase (gpo) from Lactococcus lactis subsp. cremoris (strain MG1363).